Consider the following 105-residue polypeptide: Small ribosomal subunit protein bS20 (105 aa).

This sequence belongs to the bacterial ribosomal protein bS20 family.

Binds directly to 16S ribosomal RNA. This chain is Small ribosomal subunit protein bS20, found in Caldanaerobacter subterraneus subsp. tengcongensis (strain DSM 15242 / JCM 11007 / NBRC 100824 / MB4) (Thermoanaerobacter tengcongensis).